Consider the following 61-residue polypeptide: Small ribosomal subunit protein uS14 (61 aa).

Cys-24, Cys-27, Cys-40, and Cys-43 together coordinate Zn(2+).

It belongs to the universal ribosomal protein uS14 family. Zinc-binding uS14 subfamily. As to quaternary structure, part of the 30S ribosomal subunit. Contacts proteins S3 and S10. Zn(2+) is required as a cofactor.

Its function is as follows. Binds 16S rRNA, required for the assembly of 30S particles and may also be responsible for determining the conformation of the 16S rRNA at the A site. The polypeptide is Small ribosomal subunit protein uS14 (Clostridium novyi (strain NT)).